The primary structure comprises 57 residues: Large ribosomal subunit protein bL32 (57 aa).

The span at 1–20 shows a compositional bias: basic residues; the sequence is MAVPKKKTSKGKRNQRHAVW. Positions 1-23 are disordered; that stretch reads MAVPKKKTSKGKRNQRHAVWKAK.

The protein belongs to the bacterial ribosomal protein bL32 family.

The chain is Large ribosomal subunit protein bL32 from Prochlorococcus marinus (strain SARG / CCMP1375 / SS120).